The chain runs to 121 residues: Large ribosomal subunit protein uL22 (121 aa).

The protein belongs to the universal ribosomal protein uL22 family. As to quaternary structure, part of the 50S ribosomal subunit.

Its function is as follows. This protein binds specifically to 23S rRNA; its binding is stimulated by other ribosomal proteins, e.g. L4, L17, and L20. It is important during the early stages of 50S assembly. It makes multiple contacts with different domains of the 23S rRNA in the assembled 50S subunit and ribosome. The globular domain of the protein is located near the polypeptide exit tunnel on the outside of the subunit, while an extended beta-hairpin is found that lines the wall of the exit tunnel in the center of the 70S ribosome. The sequence is that of Large ribosomal subunit protein uL22 from Synechococcus sp. (strain CC9902).